Here is a 309-residue protein sequence, read N- to C-terminus: HPr kinase/phosphorylase (309 aa).

Residues histidine 138 and lysine 159 contribute to the active site. Position 153–160 (153–160 (GQSGVGKS)) interacts with ATP. Serine 160 is a binding site for Mg(2+). Aspartate 177 acts as the Proton acceptor; for phosphorylation activity. Proton donor; for dephosphorylation activity in catalysis. The important for the catalytic mechanism of both phosphorylation and dephosphorylation stretch occupies residues 201–210 (LEIRGLGIIN). Glutamate 202 is a binding site for Mg(2+). Residue arginine 243 is part of the active site. The tract at residues 264–269 (PVRPGR) is important for the catalytic mechanism of dephosphorylation.

It belongs to the HPrK/P family. Homohexamer. Requires Mg(2+) as cofactor.

The catalysed reaction is [HPr protein]-L-serine + ATP = [HPr protein]-O-phospho-L-serine + ADP + H(+). It carries out the reaction [HPr protein]-O-phospho-L-serine + phosphate + H(+) = [HPr protein]-L-serine + diphosphate. Its function is as follows. Catalyzes the ATP- as well as the pyrophosphate-dependent phosphorylation of a specific serine residue in HPr, a phosphocarrier protein of the phosphoenolpyruvate-dependent sugar phosphotransferase system (PTS). HprK/P also catalyzes the pyrophosphate-producing, inorganic phosphate-dependent dephosphorylation (phosphorolysis) of seryl-phosphorylated HPr (P-Ser-HPr). The two antagonistic activities of HprK/P are regulated by several intracellular metabolites, which change their concentration in response to the absence or presence of rapidly metabolisable carbon sources (glucose, fructose, etc.) in the growth medium. Also phosphorylates/dephosphorylates the HPr-like catabolite repression protein crh on a specific serine residue. Therefore, by controlling the phosphorylation state of HPr and crh, HPrK/P is a sensor enzyme that plays a major role in the regulation of carbon metabolism and sugar transport: it mediates carbon catabolite repression (CCR), and regulates PTS-catalyzed carbohydrate uptake and inducer exclusion. This Bacillus cereus (strain G9842) protein is HPr kinase/phosphorylase.